We begin with the raw amino-acid sequence, 191 residues long: Potassium-transporting ATPase KdpC subunit (191 aa).

The helical transmembrane segment at 11–31 (LFVLLTAVTGVVYPLAVTGIA) threads the bilayer.

This sequence belongs to the KdpC family. The system is composed of three essential subunits: KdpA, KdpB and KdpC.

It localises to the cell inner membrane. Functionally, part of the high-affinity ATP-driven potassium transport (or Kdp) system, which catalyzes the hydrolysis of ATP coupled with the electrogenic transport of potassium into the cytoplasm. This subunit acts as a catalytic chaperone that increases the ATP-binding affinity of the ATP-hydrolyzing subunit KdpB by the formation of a transient KdpB/KdpC/ATP ternary complex. This chain is Potassium-transporting ATPase KdpC subunit, found in Dechloromonas aromatica (strain RCB).